The primary structure comprises 454 residues: tRNA modification GTPase MnmE (454 aa).

Arg23, Glu80, and Lys120 together coordinate (6S)-5-formyl-5,6,7,8-tetrahydrofolate. Positions 216–377 constitute a TrmE-type G domain; that stretch reads GMKVVIAGRP…LRNHLKQSMG (162 aa). Asn226 is a binding site for K(+). GTP is bound by residues 226 to 231, 245 to 251, 270 to 273, 335 to 338, and 358 to 360; these read NAGKSS, TDIAGTT, DTAG, NKAD, and SAR. Ser230 contributes to the Mg(2+) binding site. Residues Thr245, Ile247, and Thr250 each contribute to the K(+) site. Residue Thr251 participates in Mg(2+) binding. Position 454 (Lys454) interacts with (6S)-5-formyl-5,6,7,8-tetrahydrofolate.

Belongs to the TRAFAC class TrmE-Era-EngA-EngB-Septin-like GTPase superfamily. TrmE GTPase family. Homodimer. Heterotetramer of two MnmE and two MnmG subunits. It depends on K(+) as a cofactor.

It localises to the cytoplasm. Exhibits a very high intrinsic GTPase hydrolysis rate. Involved in the addition of a carboxymethylaminomethyl (cmnm) group at the wobble position (U34) of certain tRNAs, forming tRNA-cmnm(5)s(2)U34. This Salmonella choleraesuis (strain SC-B67) protein is tRNA modification GTPase MnmE.